A 77-amino-acid chain; its full sequence is Large ribosomal subunit protein bL28 (77 aa).

It belongs to the bacterial ribosomal protein bL28 family.

This is Large ribosomal subunit protein bL28 from Ralstonia pickettii (strain 12J).